Reading from the N-terminus, the 833-residue chain is Leucine--tRNA ligase (833 aa).

Positions 41-52 (PYPSGAGLHVGH) match the 'HIGH' region motif. A 'KMSKS' region motif is present at residues 610–614 (KMSKS). An ATP-binding site is contributed by K613.

The protein belongs to the class-I aminoacyl-tRNA synthetase family.

Its subcellular location is the cytoplasm. The enzyme catalyses tRNA(Leu) + L-leucine + ATP = L-leucyl-tRNA(Leu) + AMP + diphosphate. This chain is Leucine--tRNA ligase, found in Streptococcus pneumoniae (strain Taiwan19F-14).